Consider the following 244-residue polypeptide: rRNA adenine N-6-methyltransferase (244 aa).

S-adenosyl-L-methionine is bound by residues Asn11, Ile13, Gly38, Glu59, Asp84, and Asn101.

This sequence belongs to the class I-like SAM-binding methyltransferase superfamily. rRNA adenine N(6)-methyltransferase family.

It carries out the reaction adenosine(2085) in 23S rRNA + 2 S-adenosyl-L-methionine = N(6)-dimethyladenosine(2085) in 23S rRNA + 2 S-adenosyl-L-homocysteine + 2 H(+). Functionally, this protein produces a dimethylation of the adenine residue at position 2085 in 23S rRNA, resulting in reduced affinity between ribosomes and macrolide-lincosamide-streptogramin B antibiotics. In Staphylococcus aureus, this protein is rRNA adenine N-6-methyltransferase (ermC).